A 643-amino-acid chain; its full sequence is Tigger transposable element-derived protein 5 (643 aa).

The segment at 1–50 (MYSAGPPAVPAPRRCRRPPPGRPMQPPRPPAPAPVPAARPPPPAPGPRPR) is disordered. A compositionally biased stretch (pro residues) spans 20-48 (PGRPMQPPRPPAPAPVPAARPPPPAPGPR). One can recognise an HTH psq-type domain in the interval 52–103 (AVKMAFRKAYSIKDKLQAIERVKGGERQASVCRDFGVPGGTLRGWLKDEPKL). 2 DNA-binding regions (H-T-H motif) span residues 79–99 (QASVCRDFGVPGGTLRGWLKD) and 150–183 (PLIQAQAEAFARQIYGPECTFKASHGWFWRWQKR). One can recognise an HTH CENPB-type domain in the interval 117–190 (QRKKMRLANE…QKRHGISSQR (74 aa)). The disordered stretch occupies residues 197–236 (PVAAGPAPGPPVKQEPAQPTRAGPLPDRAASTPAPAEGGY). The 121-residue stretch at 238-358 (DEQIYNANVT…LQQKAVLLVA (121 aa)) folds into the DDE-1 domain. The tract at residues 366–395 (EARMPALEESEETRRRCRPEPTGPPEELQT) is disordered.

This sequence belongs to the tigger transposable element derived protein family.

It localises to the nucleus. In Bos taurus (Bovine), this protein is Tigger transposable element-derived protein 5 (TIGD5).